The primary structure comprises 112 residues: Serum amyloid A protein (112 aa).

The residue at position 1 (Gln-1) is a Pyrrolidone carboxylic acid. A compositionally biased stretch (basic and acidic residues) spans 75–86 (MTRDQVREDTKA). The tract at residues 75–112 (MTRDQVREDTKADQFANEWGRSGKDPNHFRPPGLPDKY) is disordered.

This sequence belongs to the SAA family. As to expression, expressed by the liver; secreted in plasma.

Its subcellular location is the secreted. Functionally, major acute phase reactant. Apolipoprotein of the HDL complex. The sequence is that of Serum amyloid A protein (SAA1) from Ovis aries (Sheep).